A 113-amino-acid polypeptide reads, in one-letter code: Large ribosomal subunit protein bL17 (113 aa).

It belongs to the bacterial ribosomal protein bL17 family. In terms of assembly, part of the 50S ribosomal subunit. Contacts protein L32.

This is Large ribosomal subunit protein bL17 from Clostridium tetani (strain Massachusetts / E88).